Consider the following 519-residue polypeptide: O-fucosyltransferase 1 (519 aa).

At 1 to 24 the chain is on the cytoplasmic side; it reads MRRLGHHRLHGKTGGVGTKGMVAK. A helical; Signal-anchor for type II membrane protein membrane pass occupies residues 25–45; it reads LSIGVIVLLICTLSLLFSANI. Residues 46-519 lie on the Lumenal side of the membrane; that stretch reads GSNREPTRPS…TNSTVTGLER (474 aa). The interval 67-86 is disordered; that stretch reads KSGGWRPSSAPRSDWPPPTK. N-linked (GlcNAc...) asparagine glycosylation is present at asparagine 118. A substrate-binding site is contributed by 260 to 262; it reads HLR. Asparagine 327, asparagine 357, and asparagine 511 each carry an N-linked (GlcNAc...) asparagine glycan. The tract at residues 497-519 is disordered; sequence RLESIRDPDSTSQTNSTVTGLER. Residues 506 to 519 are compositionally biased toward polar residues; it reads STSQTNSTVTGLER.

This sequence belongs to the glycosyltransferase GT106 family.

The protein localises to the golgi apparatus membrane. It participates in glycan metabolism. The sequence is that of O-fucosyltransferase 1 from Arabidopsis thaliana (Mouse-ear cress).